Reading from the N-terminus, the 607-residue chain is NADH-ubiquinone oxidoreductase chain 5 (607 aa).

16 helical membrane-spanning segments follow: residues 3–23 (IFTT…LISM), 35–55 (YTTT…LMFF), 84–104 (FFSI…MQFS), 117–137 (FIKY…ANNM), 140–160 (LFIG…WWYG), 171–191 (AILY…WFSL), 210–230 (LIPL…FGLH), 241–261 (TPVS…FLLV), 272–292 (FILT…AICA), 301–320 (IIAF…LGMN), 324–344 (LAFL…MCSG), 365–385 (IMPF…GMPF), 405–427 (NAWA…MRII), 457–477 (LAFG…PTSI), 482–502 (MPWF…LIAL), and 586–606 (LYFM…SINL).

This sequence belongs to the complex I subunit 5 family. In terms of assembly, core subunit of respiratory chain NADH dehydrogenase (Complex I) which is composed of 45 different subunits.

The protein localises to the mitochondrion inner membrane. It catalyses the reaction a ubiquinone + NADH + 5 H(+)(in) = a ubiquinol + NAD(+) + 4 H(+)(out). In terms of biological role, core subunit of the mitochondrial membrane respiratory chain NADH dehydrogenase (Complex I) which catalyzes electron transfer from NADH through the respiratory chain, using ubiquinone as an electron acceptor. Essential for the catalytic activity and assembly of complex I. The sequence is that of NADH-ubiquinone oxidoreductase chain 5 (Mtnd5) from Mus musculus (Mouse).